Reading from the N-terminus, the 641-residue chain is Probable potassium transport system protein Kup 4 (641 aa).

12 helical membrane-spanning segments follow: residues 31–51 (AALGALGIVYGDLGTSPLYTL), 64–84 (TASALGILSLLVWTLIITISI), 119–139 (ILAVMGLLGAALLYGDGVITP), 155–175 (GSLKPFVMPAAVAILIVFFAA), 183–203 (IGAAFGPIMLLWFLVIAVLGL), 221–241 (AIGFLAHSGGNGMLVLGGVFL), 265–285 (WYAIVLPSLLLSYAGQTALLI), 298–318 (LCPTWGVYPLVFLAMIATIIA), 355–375 (IYVPVVNWMMMVATIGITIAF), 381–401 (LAGAYGTAVSTTMLLTTCLLF), 412–432 (LAVSILIAGLFLIVDVGFFGA), and 437–457 (IAEGGWLPLTFGALVFFLMLT).

Belongs to the HAK/KUP transporter (TC 2.A.72) family.

It localises to the cell inner membrane. It carries out the reaction K(+)(in) + H(+)(in) = K(+)(out) + H(+)(out). Functionally, transport of potassium into the cell. Likely operates as a K(+):H(+) symporter. The sequence is that of Probable potassium transport system protein Kup 4 from Bradyrhizobium sp. (strain BTAi1 / ATCC BAA-1182).